The primary structure comprises 189 residues: Gluconokinase (189 aa).

An ATP-binding site is contributed by Gly-16–Ser-23.

This sequence belongs to the gluconokinase GntK/GntV family. As to quaternary structure, monomer.

The catalysed reaction is D-gluconate + ATP = 6-phospho-D-gluconate + ADP + H(+). It participates in carbohydrate acid metabolism; D-gluconate degradation. Its function is as follows. Phosphorylates gluconate to 6-phosphogluconate. This is Gluconokinase from Arabidopsis thaliana (Mouse-ear cress).